We begin with the raw amino-acid sequence, 396 residues long: DNA replication and repair protein RecF (396 aa).

Position 30-37 (Gly30–Thr37) interacts with ATP.

It belongs to the RecF family.

It is found in the cytoplasm. In terms of biological role, the RecF protein is involved in DNA metabolism; it is required for DNA replication and normal SOS inducibility. RecF binds preferentially to single-stranded, linear DNA. It also seems to bind ATP. In Thermomicrobium roseum (strain ATCC 27502 / DSM 5159 / P-2), this protein is DNA replication and repair protein RecF.